Consider the following 244-residue polypeptide: Zinc import ATP-binding protein ZnuC 2 (244 aa).

The 216-residue stretch at 3-218 (IGCASLTIQL…PEYLALFGID (216 aa)) folds into the ABC transporter domain. 35–42 (GPNGSGKT) contributes to the ATP binding site.

The protein belongs to the ABC transporter superfamily. Zinc importer (TC 3.A.1.15.5) family. The complex is composed of two ATP-binding proteins (ZnuC), two transmembrane proteins (ZnuB) and a solute-binding protein (ZnuA).

It localises to the cell inner membrane. It carries out the reaction Zn(2+)(out) + ATP(in) + H2O(in) = Zn(2+)(in) + ADP(in) + phosphate(in) + H(+)(in). Functionally, part of the ABC transporter complex ZnuABC involved in zinc import. Responsible for energy coupling to the transport system. The chain is Zinc import ATP-binding protein ZnuC 2 from Hahella chejuensis (strain KCTC 2396).